A 453-amino-acid chain; its full sequence is Bifunctional protein GlmU (453 aa).

The interval 1–226 is pyrophosphorylase; sequence MSLNVVILAA…AMEVEGANNR (226 aa). UDP-N-acetyl-alpha-D-glucosamine contacts are provided by residues 8–11, lysine 22, glutamine 73, 78–79, 100–102, glycine 137, glutamate 151, asparagine 166, and asparagine 224; these read LAAG, GT, and YGD. Mg(2+) is bound at residue aspartate 102. Asparagine 224 contacts Mg(2+). The interval 227–247 is linker; sequence VQLAQLERSYQKMQAERLMIA. Positions 248 to 453 are N-acetyltransferase; it reads GATLIDPARF…QNWARPVKKK (206 aa). Residues arginine 330 and lysine 348 each coordinate UDP-N-acetyl-alpha-D-glucosamine. The Proton acceptor role is filled by histidine 360. The UDP-N-acetyl-alpha-D-glucosamine site is built by tyrosine 363 and asparagine 374. Acetyl-CoA-binding positions include alanine 377, 383–384, serine 402, alanine 420, and arginine 437; that span reads NY.

In the N-terminal section; belongs to the N-acetylglucosamine-1-phosphate uridyltransferase family. The protein in the C-terminal section; belongs to the transferase hexapeptide repeat family. Homotrimer. Mg(2+) is required as a cofactor.

It localises to the cytoplasm. It catalyses the reaction alpha-D-glucosamine 1-phosphate + acetyl-CoA = N-acetyl-alpha-D-glucosamine 1-phosphate + CoA + H(+). The catalysed reaction is N-acetyl-alpha-D-glucosamine 1-phosphate + UTP + H(+) = UDP-N-acetyl-alpha-D-glucosamine + diphosphate. It functions in the pathway nucleotide-sugar biosynthesis; UDP-N-acetyl-alpha-D-glucosamine biosynthesis; N-acetyl-alpha-D-glucosamine 1-phosphate from alpha-D-glucosamine 6-phosphate (route II): step 2/2. It participates in nucleotide-sugar biosynthesis; UDP-N-acetyl-alpha-D-glucosamine biosynthesis; UDP-N-acetyl-alpha-D-glucosamine from N-acetyl-alpha-D-glucosamine 1-phosphate: step 1/1. Its pathway is bacterial outer membrane biogenesis; LPS lipid A biosynthesis. Catalyzes the last two sequential reactions in the de novo biosynthetic pathway for UDP-N-acetylglucosamine (UDP-GlcNAc). The C-terminal domain catalyzes the transfer of acetyl group from acetyl coenzyme A to glucosamine-1-phosphate (GlcN-1-P) to produce N-acetylglucosamine-1-phosphate (GlcNAc-1-P), which is converted into UDP-GlcNAc by the transfer of uridine 5-monophosphate (from uridine 5-triphosphate), a reaction catalyzed by the N-terminal domain. The sequence is that of Bifunctional protein GlmU from Aeromonas hydrophila subsp. hydrophila (strain ATCC 7966 / DSM 30187 / BCRC 13018 / CCUG 14551 / JCM 1027 / KCTC 2358 / NCIMB 9240 / NCTC 8049).